A 1328-amino-acid polypeptide reads, in one-letter code: Tubulin polyglutamylase TTLL5 (1328 aa).

The tract at residues 1–22 (MPVVMARDLEETASSSEDEDLA) is disordered. Residues 62–407 (RYHLSYKIVR…VCQDPAQRTS (346 aa)) form the TTL domain. ATP is bound by residues Lys-180, 186–187 (RG), 208–211 (SRYI), and 221–223 (KFD). A protein is bound at residue Arg-186. Arg-247 lines the L-glutamate pocket. 268 to 269 (TN) is an ATP binding site. Residues Tyr-270, Ser-271, and Lys-293 each contribute to the L-glutamate site. The Mg(2+) site is built by Asp-353, Glu-366, and Asn-368. Positions 378-488 (PLDLKIKASM…RGGFIRIFPT (111 aa)) are c-MTBD region. Lys-384 contacts L-glutamate. Disordered regions lie at residues 411-436 (IYPS…SASD), 585-631 (AQPA…QAKY), 834-853 (HSKS…KGDH), 948-975 (PALL…PAGL), 1006-1032 (SSAK…EGED), 1085-1129 (RSSA…LQTG), and 1212-1271 (RISS…QLNG). Over residues 420-432 (RNPFQKPQRTRPL) the composition is skewed to polar residues. Residues 597 to 617 (ESEEEEEVGLDNDDEEQEASQ) show a composition bias toward acidic residues. Residues 838 to 847 (SKNSSSYSDS) are compositionally biased toward low complexity. 4 stretches are compositionally biased toward polar residues: residues 1116-1128 (THSS…SLQT), 1214-1227 (SSAT…NTLP), 1234-1248 (PNSS…SNHK), and 1257-1271 (QRAS…QLNG).

Belongs to the tubulin--tyrosine ligase family. Interacts with the transcriptional coactivators NCOA1/SRC-1 and NCOA2/TIF2. Mg(2+) is required as a cofactor. In terms of tissue distribution, highly expressed in brain, kidney, liver, spleen and testis. Expressed in heart, lung, muscle and trachea.

Its subcellular location is the cell projection. The protein localises to the cilium. It localises to the cytoplasm. It is found in the cytoskeleton. The protein resides in the cilium basal body. Its subcellular location is the nucleus. The enzyme catalyses L-glutamyl-[protein] + L-glutamate + ATP = gamma-L-glutamyl-L-glutamyl-[protein] + ADP + phosphate + H(+). It catalyses the reaction (L-glutamyl)(n)-gamma-L-glutamyl-L-glutamyl-[protein] + L-glutamate + ATP = (L-glutamyl)(n+1)-gamma-L-glutamyl-L-glutamyl-[protein] + ADP + phosphate + H(+). Functionally, polyglutamylase which modifies tubulin, generating polyglutamate side chains on the gamma-carboxyl group of specific glutamate residues within the C-terminal tail of tubulin. Preferentially mediates ATP-dependent initiation step of the polyglutamylation reaction over the elongation step. Preferentially modifies the alpha-tubulin tail over a beta-tail. Required for CCSAP localization to both polyglutamylated spindle and cilia microtubules. Increases the effects of transcriptional coactivator NCOA2/TIF2 in glucocorticoid receptor-mediated repression and induction and in androgen receptor-mediated induction. The protein is Tubulin polyglutamylase TTLL5 of Mus musculus (Mouse).